A 119-amino-acid polypeptide reads, in one-letter code: Small ribosomal subunit protein eS25 (119 aa).

The segment at 1-42 (MPPKKDTKASAKQPQKTQKKKEGSGGGKAKKKKWSKGKVRDK) is disordered. Residues 28-37 (KAKKKKWSKG) are compositionally biased toward basic residues.

Belongs to the eukaryotic ribosomal protein eS25 family.

The chain is Small ribosomal subunit protein eS25 (RpS25) from Spodoptera frugiperda (Fall armyworm).